The primary structure comprises 493 residues: tRNA-2-methylthio-N(6)-dimethylallyladenosine synthase (493 aa).

The segment covering 1 to 14 has biased composition (polar residues); sequence MPMTGLLQTTLSTA. Positions 1-31 are disordered; that stretch reads MPMTGLLQTTLSTADQDRSGPAATTGDTPAR. An MTTase N-terminal domain is found at 35–155; it reads KRLHVITWGC…LGGMVRRAMN (121 aa). Cysteine 44, cysteine 80, cysteine 118, cysteine 199, cysteine 203, and cysteine 206 together coordinate [4Fe-4S] cluster. Residues 185–417 form the Radical SAM core domain; the sequence is LAGGRTAFLT…QALLRTQQEA (233 aa). A TRAM domain is found at 420–482; sequence TACIGKTVNV…TNSLSATLPD (63 aa).

The protein belongs to the methylthiotransferase family. MiaB subfamily. In terms of assembly, monomer. [4Fe-4S] cluster is required as a cofactor.

Its subcellular location is the cytoplasm. It carries out the reaction N(6)-dimethylallyladenosine(37) in tRNA + (sulfur carrier)-SH + AH2 + 2 S-adenosyl-L-methionine = 2-methylsulfanyl-N(6)-dimethylallyladenosine(37) in tRNA + (sulfur carrier)-H + 5'-deoxyadenosine + L-methionine + A + S-adenosyl-L-homocysteine + 2 H(+). In terms of biological role, catalyzes the methylthiolation of N6-(dimethylallyl)adenosine (i(6)A), leading to the formation of 2-methylthio-N6-(dimethylallyl)adenosine (ms(2)i(6)A) at position 37 in tRNAs that read codons beginning with uridine. This Granulibacter bethesdensis (strain ATCC BAA-1260 / CGDNIH1) protein is tRNA-2-methylthio-N(6)-dimethylallyladenosine synthase.